A 484-amino-acid chain; its full sequence is Poly(A) RNA polymerase GLD2 (484 aa).

2 positions are modified to phosphoserine: Ser62 and Ser69. Residues 72 to 97 are disordered; it reads FRGRKRLSDEKNLPLDGKRQRFHSPH. The Nuclear localization signal motif lies at 76–92; it reads KRLSDEKNLPLDGKRQR. Over residues 77-90 the composition is skewed to basic and acidic residues; it reads RLSDEKNLPLDGKR. Ser95 is modified (phosphoserine). The Mg(2+) site is built by Asp213 and Asp215. In terms of domain architecture, PAP-associated spans 386–440; that stretch reads NLGDLLLGFLKYYATEFDWNSQMISVREAKAIPRPDGIEWRNKYICVEEPFDGTN.

Belongs to the DNA polymerase type-B-like family. GLD2 subfamily. As to quaternary structure, interacts with CPEB1, CPEB2, CPSF1 and PABPC1. Interacts with QKI isoform QKI7; promoting recruitment to miRNA miR-122 and miR-122 stabilization. Mg(2+) serves as cofactor. The cofactor is Mn(2+). Expressed in brain. Within brain, it is expressed in cerebellum, hippocampus and medulla.

It localises to the cytoplasm. The protein localises to the nucleus. The enzyme catalyses RNA(n) + ATP = RNA(n)-3'-adenine ribonucleotide + diphosphate. Functionally, cytoplasmic poly(A) RNA polymerase that adds successive AMP monomers to the 3'-end of specific RNAs, forming a poly(A) tail. In contrast to the canonical nuclear poly(A) RNA polymerase, it only adds poly(A) to selected cytoplasmic mRNAs. Does not play a role in replication-dependent histone mRNA degradation. Adds a single nucleotide to the 3' end of specific miRNAs, monoadenylation stabilizes and prolongs the activity of some but not all miRNAs. In Homo sapiens (Human), this protein is Poly(A) RNA polymerase GLD2.